A 96-amino-acid chain; its full sequence is Small ribosomal subunit protein bS6 (96 aa).

The protein belongs to the bacterial ribosomal protein bS6 family.

In terms of biological role, binds together with bS18 to 16S ribosomal RNA. This Streptococcus thermophilus (strain ATCC BAA-250 / LMG 18311) protein is Small ribosomal subunit protein bS6.